The following is a 422-amino-acid chain: Replication factor C large subunit (422 aa).

63 to 70 contributes to the ATP binding site; it reads GPPGIGKT.

It belongs to the activator 1 small subunits family. RfcL subfamily. In terms of assembly, heteromultimer composed of small subunits (RfcS) and large subunits (RfcL).

Part of the RFC clamp loader complex which loads the PCNA sliding clamp onto DNA. This is Replication factor C large subunit from Pyrobaculum neutrophilum (strain DSM 2338 / JCM 9278 / NBRC 100436 / V24Sta) (Thermoproteus neutrophilus).